The primary structure comprises 35 residues: N-acylglucosamine 2-epimerase (35 aa).

Residues 1-21 (LNLVDQLGEADEELAGTYAEL) form a leucine-zipper region.

Belongs to the N-acylglucosamine 2-epimerase family. As to quaternary structure, homodimer. Forms a heterodimer with renin and inhibits its activity.

The catalysed reaction is an N-acyl-D-glucosamine = an N-acyl-D-mannosamine. It functions in the pathway amino-sugar metabolism; N-acetylneuraminate degradation. Functionally, catalyzes the interconversion of N-acetylglucosamine to N-acetylmannosamine. Involved in the N-glycolylneuraminic acid (Neu5Gc) degradation pathway. The sequence is that of N-acylglucosamine 2-epimerase from Canis lupus familiaris (Dog).